The sequence spans 299 residues: MTESNRLRIAIQKSGRLSTDSQQLLKSCGVKFSINEQRLIAHADNMPIDLLRVRDDDIPGLVMDGVVDLGIIGENVLEEEQIERQTLNKPAEYVKLRQLDFGACRLSLAVPTEFSYADASSLEGLRIATSYPNLLRRFMQQKSINYRDCMLKGSVEVAPRAGLADGICDLVSTGATLEANGLYETEVIYRSMACIIQSTQTQAPSKQALIDRILSRVNGVIRARESKYILLHAPTETLDQIVALLPGAENPTVLPLNDDTNRVAIHAVSTEDLFWDTMEQLTALGASSILVMPIEKMMG.

The protein belongs to the ATP phosphoribosyltransferase family. Long subfamily. Requires Mg(2+) as cofactor.

It is found in the cytoplasm. It carries out the reaction 1-(5-phospho-beta-D-ribosyl)-ATP + diphosphate = 5-phospho-alpha-D-ribose 1-diphosphate + ATP. The protein operates within amino-acid biosynthesis; L-histidine biosynthesis; L-histidine from 5-phospho-alpha-D-ribose 1-diphosphate: step 1/9. Its activity is regulated as follows. Feedback inhibited by histidine. Catalyzes the condensation of ATP and 5-phosphoribose 1-diphosphate to form N'-(5'-phosphoribosyl)-ATP (PR-ATP). Has a crucial role in the pathway because the rate of histidine biosynthesis seems to be controlled primarily by regulation of HisG enzymatic activity. The protein is ATP phosphoribosyltransferase of Shewanella oneidensis (strain ATCC 700550 / JCM 31522 / CIP 106686 / LMG 19005 / NCIMB 14063 / MR-1).